We begin with the raw amino-acid sequence, 531 residues long: Chaperonin GroEL, chloroplastic (531 aa).

Residues 30–33 (TLGP), 87–91 (DGTTT), glycine 415, 481–483 (NAA), and aspartate 497 each bind ATP.

This sequence belongs to the chaperonin (HSP60) family. As to quaternary structure, forms a cylinder of 14 subunits composed of two heptameric rings stacked back-to-back. Interacts with the co-chaperonin GroES.

The protein resides in the plastid. It localises to the chloroplast. It catalyses the reaction ATP + H2O + a folded polypeptide = ADP + phosphate + an unfolded polypeptide.. In terms of biological role, together with its co-chaperonin GroES, plays an essential role in assisting protein folding. The GroEL-GroES system forms a nano-cage that allows encapsulation of the non-native substrate proteins and provides a physical environment optimized to promote and accelerate protein folding. This is Chaperonin GroEL, chloroplastic from Emiliania huxleyi (Coccolithophore).